Reading from the N-terminus, the 202-residue chain is uncharacterized protein (202 aa).

An N-terminal signal peptide occupies residues 1 to 18 (MKNRLLILSLLVSVPAFA).

This sequence to E.coli YebB.

This is an uncharacterized protein from Escherichia coli (strain K12).